Consider the following 237-residue polypeptide: NAD-dependent protein deacylase (237 aa).

The Deacetylase sirtuin-type domain occupies 1–235 (MRIAVLSGAG…PGLLQRLPAL (235 aa)). Residue 8–28 (GAGISAESGVPTFRDDKNGLW) coordinates NAD(+). Residues Y53 and R56 each coordinate substrate. 86-89 (QNVD) contacts NAD(+). Catalysis depends on H104, which acts as the Proton acceptor. Zn(2+) contacts are provided by C112, C115, C138, and C140. NAD(+) contacts are provided by residues 177 to 179 (GTS), 203 to 205 (NPE), and A221.

Belongs to the sirtuin family. Class III subfamily. The cofactor is Zn(2+).

The protein localises to the cytoplasm. The catalysed reaction is N(6)-acetyl-L-lysyl-[protein] + NAD(+) + H2O = 2''-O-acetyl-ADP-D-ribose + nicotinamide + L-lysyl-[protein]. The enzyme catalyses N(6)-succinyl-L-lysyl-[protein] + NAD(+) + H2O = 2''-O-succinyl-ADP-D-ribose + nicotinamide + L-lysyl-[protein]. Its function is as follows. NAD-dependent lysine deacetylase and desuccinylase that specifically removes acetyl and succinyl groups on target proteins. Modulates the activities of several proteins which are inactive in their acylated form. The sequence is that of NAD-dependent protein deacylase from Mycolicibacterium paratuberculosis (strain ATCC BAA-968 / K-10) (Mycobacterium paratuberculosis).